The chain runs to 503 residues: Transcription termination/antitermination protein NusA (503 aa).

Residues 140–206 (GELVIGVVKR…RGPQLLVSRT (67 aa)) form the S1 motif domain. Residues 308 to 374 (SHTMDIAVNK…FMEKLDVDEE (67 aa)) enclose the KH domain.

The protein belongs to the NusA family. As to quaternary structure, monomer. Binds directly to the core enzyme of the DNA-dependent RNA polymerase and to nascent RNA.

It is found in the cytoplasm. In terms of biological role, participates in both transcription termination and antitermination. This Coxiella burnetii (strain RSA 493 / Nine Mile phase I) protein is Transcription termination/antitermination protein NusA.